The sequence spans 270 residues: uncharacterized protein (270 aa).

A signal peptide spans 1-22 (MEYIKKIALYMSVLLLIIFIGG). A lipid anchor (N-palmitoyl cysteine) is attached at Cys-23. Residue Cys-23 is the site of S-diacylglycerol cysteine attachment.

Belongs to the staphylococcal tandem lipoprotein family.

Its subcellular location is the cell membrane. This is an uncharacterized protein from Staphylococcus aureus (strain MW2).